The following is a 463-amino-acid chain: Glutamate--tRNA ligase 1 (463 aa).

Residues 10 to 20 (PSPTGYLHIGG) carry the 'HIGH' region motif. A 'KMSKS' region motif is present at residues 238 to 242 (KLSKR). Lysine 241 is an ATP binding site.

It belongs to the class-I aminoacyl-tRNA synthetase family. Glutamate--tRNA ligase type 1 subfamily. In terms of assembly, monomer.

The protein localises to the cytoplasm. It carries out the reaction tRNA(Glu) + L-glutamate + ATP = L-glutamyl-tRNA(Glu) + AMP + diphosphate. Functionally, catalyzes the attachment of glutamate to tRNA(Glu) in a two-step reaction: glutamate is first activated by ATP to form Glu-AMP and then transferred to the acceptor end of tRNA(Glu). This is Glutamate--tRNA ligase 1 from Helicobacter pylori (strain J99 / ATCC 700824) (Campylobacter pylori J99).